The primary structure comprises 197 residues: Imidazoleglycerol-phosphate dehydratase (197 aa).

The protein belongs to the imidazoleglycerol-phosphate dehydratase family.

The protein localises to the cytoplasm. It catalyses the reaction D-erythro-1-(imidazol-4-yl)glycerol 3-phosphate = 3-(imidazol-4-yl)-2-oxopropyl phosphate + H2O. It participates in amino-acid biosynthesis; L-histidine biosynthesis; L-histidine from 5-phospho-alpha-D-ribose 1-diphosphate: step 6/9. The polypeptide is Imidazoleglycerol-phosphate dehydratase (Pseudomonas putida (strain GB-1)).